Reading from the N-terminus, the 500-residue chain is Probable cytosol aminopeptidase (500 aa).

2 residues coordinate Mn(2+): lysine 264 and aspartate 269. Lysine 276 is an active-site residue. Aspartate 287, aspartate 346, and glutamate 348 together coordinate Mn(2+). Residue arginine 350 is part of the active site.

This sequence belongs to the peptidase M17 family. Mn(2+) is required as a cofactor.

Its subcellular location is the cytoplasm. It carries out the reaction Release of an N-terminal amino acid, Xaa-|-Yaa-, in which Xaa is preferably Leu, but may be other amino acids including Pro although not Arg or Lys, and Yaa may be Pro. Amino acid amides and methyl esters are also readily hydrolyzed, but rates on arylamides are exceedingly low.. The catalysed reaction is Release of an N-terminal amino acid, preferentially leucine, but not glutamic or aspartic acids.. Presumably involved in the processing and regular turnover of intracellular proteins. Catalyzes the removal of unsubstituted N-terminal amino acids from various peptides. This chain is Probable cytosol aminopeptidase, found in Chlamydia abortus (strain DSM 27085 / S26/3) (Chlamydophila abortus).